Here is a 350-residue protein sequence, read N- to C-terminus: MMSQSDSLKGRKVVFHDMCLRDGMHAKREQIGVEQMIAVATALDAAGVPYIQVTHGAGLGGNSLQHGFAPHSNEEYIGAVAAKMKQAKVSVLLIPGLGTMKELQSAFDCGARSVHVATHCTEADTSPQHIAFARKLGMDTSGFLMMSHLNDPAGIARQGKLMESYGAQTVYVTDSAGYMLPEDVKARVGALREVLAPETGIGFHGHHNLGMGIANSIAAIEAGASRIDGSVAGLGAGAGNTPLEVFAAVCERMGIDTGVDLFRLMDVAEDIIVPMMEHVVRVDRESLTLGYAGVYSTFLLHSKRAAERFGVPARDILVELGRKKMIGGQEDMILDTAMSMAKARGLLKSA.

The 253-residue stretch at valine 13–methionine 265 folds into the Pyruvate carboxyltransferase domain. Arginine 21–aspartate 22 contributes to the substrate binding site. A Mn(2+)-binding site is contributed by aspartate 22. The active-site Proton acceptor is the histidine 25. Substrate-binding residues include serine 175 and histidine 204. Mn(2+) is bound by residues histidine 204 and histidine 206. A substrate-binding site is contributed by tyrosine 295.

Belongs to the 4-hydroxy-2-oxovalerate aldolase family.

The catalysed reaction is (S)-4-hydroxy-2-oxopentanoate = acetaldehyde + pyruvate. The polypeptide is 4-hydroxy-2-oxovalerate aldolase 3 (lapG) (Azotobacter vinelandii (strain DJ / ATCC BAA-1303)).